A 386-amino-acid chain; its full sequence is Patatin-06 (386 aa).

A signal peptide spans 1-23 (MATTKSFLILFFMILATTSSTCA). In terms of domain architecture, PNPLA spans 32–229 (LSIDGGGIKG…TVGDPALLSL (198 aa)). The GXGXXG motif lies at 36 to 41 (GGGIKG). A GXSXG motif is present at residues 75 to 79 (GTSTG). The active-site Nucleophile is Ser-77. N-linked (GlcNAc...) asparagine glycosylation is present at Asn-115. Catalysis depends on Asp-215, which acts as the Proton acceptor. Positions 215-217 (DGG) match the DGA/G motif. A coiled-coil region spans residues 321-384 (ENALTGTTTE…NRKKLRANKA (64 aa)).

Belongs to the patatin family. Tuber.

It is found in the vacuole. Functionally, probable lipolytic acyl hydrolase (LAH), an activity which is thought to be involved in the response of tubers to pathogens. This chain is Patatin-06, found in Solanum tuberosum (Potato).